The following is a 116-amino-acid chain: Iron-sulfur cluster insertion protein ErpA (116 aa).

Residues Cys44, Cys108, and Cys110 each coordinate iron-sulfur cluster.

It belongs to the HesB/IscA family. Homodimer. The cofactor is iron-sulfur cluster.

Its function is as follows. Required for insertion of 4Fe-4S clusters for at least IspG. The protein is Iron-sulfur cluster insertion protein ErpA of Francisella philomiragia subsp. philomiragia (strain ATCC 25017 / CCUG 19701 / FSC 153 / O#319-036).